The primary structure comprises 559 residues: Transcription activator of gluconeogenesis ERT1-2 (559 aa).

A DNA-binding region (zn(2)-C6 fungal-type) is located at residues 23–51 (CIHCQRTHLTCDNNRPCERCVARGFADTC). 3 disordered regions span residues 63-159 (DDKE…TPSQ), 231-263 (SNSLLLGNNSQSPNTHSPHNQDQPTPQAATPSA), and 329-349 (AGQPQNTNGNGNGSEAPDSPS). Composition is skewed to low complexity over residues 139 to 159 (QGPQRQGAQQPQGGQSSTPSQ) and 231 to 244 (SNSLLLGNNSQSPN). The span at 245-260 (THSPHNQDQPTPQAAT) shows a compositional bias: polar residues. The PAS domain maps to 440–512 (ALLEYQKFIS…ELFSRIAFGD (73 aa)).

Belongs to the ERT1/acuK family.

Its subcellular location is the nucleus. Transcription factor which regulates nonfermentable carbon utilization. Activator of gluconeogenetic genes. This chain is Transcription activator of gluconeogenesis ERT1-2 (ERT1-2), found in Yarrowia lipolytica (strain CLIB 122 / E 150) (Yeast).